Reading from the N-terminus, the 98-residue chain is Co-chaperonin GroES (98 aa).

It belongs to the GroES chaperonin family. In terms of assembly, heptamer of 7 subunits arranged in a ring. Interacts with the chaperonin GroEL.

The protein resides in the cytoplasm. In terms of biological role, together with the chaperonin GroEL, plays an essential role in assisting protein folding. The GroEL-GroES system forms a nano-cage that allows encapsulation of the non-native substrate proteins and provides a physical environment optimized to promote and accelerate protein folding. GroES binds to the apical surface of the GroEL ring, thereby capping the opening of the GroEL channel. This is Co-chaperonin GroES from Beutenbergia cavernae (strain ATCC BAA-8 / DSM 12333 / CCUG 43141 / JCM 11478 / NBRC 16432 / NCIMB 13614 / HKI 0122).